A 293-amino-acid polypeptide reads, in one-letter code: Elongation factor Ts (293 aa).

Positions 80 to 83 (TDFV) are involved in Mg(2+) ion dislocation from EF-Tu.

This sequence belongs to the EF-Ts family.

It is found in the cytoplasm. Functionally, associates with the EF-Tu.GDP complex and induces the exchange of GDP to GTP. It remains bound to the aminoacyl-tRNA.EF-Tu.GTP complex up to the GTP hydrolysis stage on the ribosome. This Burkholderia lata (strain ATCC 17760 / DSM 23089 / LMG 22485 / NCIMB 9086 / R18194 / 383) protein is Elongation factor Ts.